The following is a 359-amino-acid chain: sn-1 acyl-lipid omega-3 desaturase (ferredoxin) (359 aa).

The span at 1 to 15 shows a compositional bias: polar residues; sequence MQLDTISFNNPLNSE. Residues 1–20 are disordered; the sequence is MQLDTISFNNPLNSETSEDT. 2 consecutive transmembrane segments (helical) span residues 47-67 and 70-90; these read LFYFFRDILIIGLLYAVASYL and WLFFPIFWLMQGTMFWALFVV. The Histidine box-1 signature appears at 92–96; that stretch reads HDCGH. Residues 128–132 carry the Histidine box-2 motif; it reads HRTHH. Transmembrane regions (helical) follow at residues 207–227 and 228–248; these read VLLIGMVGLLGFLTYQWGWMW and LLKYYAVPYLVFIVWLDLVTF. Positions 294-298 match the Histidine box-3 motif; sequence HHIFL.

The protein belongs to the fatty acid desaturase type 2 family. Fe(2+) is required as a cofactor.

The protein resides in the membrane. The catalysed reaction is a 1-[(9Z,12Z)-octadecdienoyl]-2-acyl-glycerolipid + 2 reduced [2Fe-2S]-[ferredoxin] + O2 + 2 H(+) = a 1-[(9Z,12Z,15Z)-octadectrienoyl]-2-acyl-glycerolipid + 2 oxidized [2Fe-2S]-[ferredoxin] + 2 H2O. The enzyme catalyses a 1-[(6Z,9Z,12Z)-octadectrienoyl]-2-acyl-glycerolipid + 2 reduced [2Fe-2S]-[ferredoxin] + O2 + 2 H(+) = a 1-[(6Z,9Z,12Z,15Z)-octadectetraenoyl]-2-acyl-glycerolipid + 2 oxidized [2Fe-2S]-[ferredoxin] + 2 H2O. The protein operates within lipid metabolism; polyunsaturated fatty acid biosynthesis. Desaturase involved in fatty acid biosynthesis. Introduces a double bond at carbon 15 of linoleoyl and gamma-linolenoyl groups attached to the sn-1 position of the glycerol moiety of membrane glycerolipids. The protein is sn-1 acyl-lipid omega-3 desaturase (ferredoxin) of Nostoc sp. (strain 36).